A 258-amino-acid chain; its full sequence is Dihydroorotate dehydrogenase B (NAD(+)), electron transfer subunit (258 aa).

One can recognise an FAD-binding FR-type domain in the interval 2 to 100 (ILKENLTVVS…LGPQGNGFDL (99 aa)). Residues 51 to 54 (RPIS), 68 to 70 (IYR), and 75 to 76 (GT) contribute to the FAD site. 4 residues coordinate [2Fe-2S] cluster: cysteine 220, cysteine 225, cysteine 228, and cysteine 244.

Belongs to the PyrK family. As to quaternary structure, heterotetramer of 2 PyrK and 2 PyrD type B subunits. [2Fe-2S] cluster is required as a cofactor. Requires FAD as cofactor.

Its pathway is pyrimidine metabolism; UMP biosynthesis via de novo pathway; orotate from (S)-dihydroorotate (NAD(+) route): step 1/1. In terms of biological role, responsible for channeling the electrons from the oxidation of dihydroorotate from the FMN redox center in the PyrD type B subunit to the ultimate electron acceptor NAD(+). The polypeptide is Dihydroorotate dehydrogenase B (NAD(+)), electron transfer subunit (Streptococcus mutans serotype c (strain ATCC 700610 / UA159)).